A 571-amino-acid polypeptide reads, in one-letter code: Urease subunit alpha (571 aa).

In terms of domain architecture, Urease spans 134–571; the sequence is GAIDTHIHFI…LPMAQRYFLF (438 aa). 3 residues coordinate Ni(2+): His139, His141, and Lys222. N6-carboxylysine is present on Lys222. His224 serves as a coordination point for substrate. His251 and His277 together coordinate Ni(2+). The active-site Proton donor is the His325. Asp365 is a binding site for Ni(2+).

It belongs to the metallo-dependent hydrolases superfamily. Urease alpha subunit family. Heterotrimer of UreA (gamma), UreB (beta) and UreC (alpha) subunits. Three heterotrimers associate to form the active enzyme. Ni cation is required as a cofactor. Post-translationally, carboxylation allows a single lysine to coordinate two nickel ions.

The protein resides in the cytoplasm. The catalysed reaction is urea + 2 H2O + H(+) = hydrogencarbonate + 2 NH4(+). Its pathway is nitrogen metabolism; urea degradation; CO(2) and NH(3) from urea (urease route): step 1/1. This Bordetella parapertussis (strain 12822 / ATCC BAA-587 / NCTC 13253) protein is Urease subunit alpha.